A 261-amino-acid polypeptide reads, in one-letter code: Phosphoinositide-3-kinase-interacting protein 1 (261 aa).

The signal sequence occupies residues 1–21 (MLLAWVRTILVSNMLLAEAYG). Residues 22–166 (SGGCFWDNGH…NSKEKKDLGT (145 aa)) lie on the Extracellular side of the membrane. One can recognise a Kringle domain in the interval 24-101 (GCFWDNGHLY…EKRPCQDLRC (78 aa)). Cystine bridges form between cysteine 25–cysteine 101, cysteine 46–cysteine 82, and cysteine 70–cysteine 96. The segment covering 90–101 (APEKRPCQDLRC) has biased composition (basic and acidic residues). Positions 90–122 (APEKRPCQDLRCPDTTSQGLPTSATETEEAAEV) are disordered. Residues 167-187 (LGYVLGITMMVIIVVIGAGIV) traverse the membrane as a helical segment. The Cytoplasmic segment spans residues 188–261 (LGYTYKRGKD…LMGQAGTPGA (74 aa)).

It localises to the cell membrane. In terms of biological role, negative regulator of hepatic phosphatidylinositol 3-kinase (PI3K) activity. This is Phosphoinositide-3-kinase-interacting protein 1 (PIK3IP1) from Bos taurus (Bovine).